Reading from the N-terminus, the 457-residue chain is Argininosuccinate lyase (457 aa).

The protein belongs to the lyase 1 family. Argininosuccinate lyase subfamily.

The protein resides in the cytoplasm. The catalysed reaction is 2-(N(omega)-L-arginino)succinate = fumarate + L-arginine. The protein operates within amino-acid biosynthesis; L-arginine biosynthesis; L-arginine from L-ornithine and carbamoyl phosphate: step 3/3. The chain is Argininosuccinate lyase from Escherichia fergusonii (strain ATCC 35469 / DSM 13698 / CCUG 18766 / IAM 14443 / JCM 21226 / LMG 7866 / NBRC 102419 / NCTC 12128 / CDC 0568-73).